The chain runs to 391 residues: Phosphoglycerate kinase (391 aa).

Substrate-binding positions include 21–23 (DLN), Arg-36, 59–62 (HLGR), Arg-113, and Arg-146. ATP is bound by residues Lys-197, Glu-319, and 345 to 348 (GGDT).

The protein belongs to the phosphoglycerate kinase family. As to quaternary structure, monomer.

Its subcellular location is the cytoplasm. It catalyses the reaction (2R)-3-phosphoglycerate + ATP = (2R)-3-phospho-glyceroyl phosphate + ADP. The protein operates within carbohydrate degradation; glycolysis; pyruvate from D-glyceraldehyde 3-phosphate: step 2/5. The sequence is that of Phosphoglycerate kinase from Shewanella halifaxensis (strain HAW-EB4).